The sequence spans 75 residues: Exodeoxyribonuclease 7 small subunit (75 aa).

This sequence belongs to the XseB family. In terms of assembly, heterooligomer composed of large and small subunits.

The protein resides in the cytoplasm. It carries out the reaction Exonucleolytic cleavage in either 5'- to 3'- or 3'- to 5'-direction to yield nucleoside 5'-phosphates.. Bidirectionally degrades single-stranded DNA into large acid-insoluble oligonucleotides, which are then degraded further into small acid-soluble oligonucleotides. The protein is Exodeoxyribonuclease 7 small subunit of Elusimicrobium minutum (strain Pei191).